A 2034-amino-acid polypeptide reads, in one-letter code: MGSQVLQILRQGVWASLTGGWFFDPHQSTFSNCFHLYVWIFLLIFPFLLYMVLPPSLMVAGVYCLVVAVIFATIKTVNYRLHAMFDQGEIVEKRSSTMGELEEEPAQGDSNPPRDPGVEMTVFRKVSSTPPVRCSSQHSVFGFNQVSELLPRMEDSGPLRDIKELVREQGSNNVIVTSADREMLKLSSQEKLIGDLPQTPPGAVPDPSLASTDSSEPSPLAGDGAPWSGSSMADTPMSPLLKGSLSQELSKSFLTLTQPDRALVRTSSRREQRRGAGGYQPLDRRGSGEPTPQKAGSSDSCFSGTDRETLSSFKSEKTNSTHLDSPPGGPAPEGSDTDPPSEAELPASPDAGVPSDDTLRSFDTVIGAGTPPGLAEPLLVVRPKDLALLRPSKRQPPLRRHSPPGRAPRRPLLEGGGFFEDEDTSEGSELSPASSLRSQRRYSTDSSSSTSCYSPESSRGAAGGPRKRRAPHGAEEGTAVPPKRPYGTQRTPSTASAKTHARVLSMDGAGGDVLRPPLAGCKAELEAQVGVEQAASEPVVLPAEARRGPAANQPGWRGELQEEGAVGGAAEETGRRDRSSSVRRTQAIRRRHNAGSNPTPPASVMGSPPSSLQEAQRGRAASHSRALTLPSALHFASSLLLTRAGANVHEACTFDDTSEGAVHYFYDESGVRRSYTFGLAGGGYENPVGQQGEQTANGAWDRHSHSSSFHSADVPEATGGLNLLQPRPVVLQGMQVRRVPLEIPEEQTLMEEAPPRAQHSYKYWLLPGRWTSVRYERLALLALLDRTRGVLENIFGVGLSSLVAFLGYLLLLKGFFTDIWVFQFCLVIASCQYSLLKSVQPDAASPMHGHNWVIAYSRPVYFCICCLLIWLLDALGSAQPFPPVSLYGLTLFSASFFFCARDVATVFTLCFPFVFLLGLLPQVNTCLMYLLEQIDMHGFGGTAATSPLTAVFSLSRSLLAAALLYGFCLGAIKTPWPEQHVPVLFSVFCGLLVALSYHLSRQSSDPTVLWSLIRSKLFPELEERSLETARAEPPDPLPDKMRQSVREVLHSDLVMCVVIAVLTFAISASTVFIALKSVLGFVLYALAGAVGFFTHYLLPQLRKQLPWFCLSQPVLKPLEYSQYEVRGAAQVMWFEKLYAGLQCVEKYLIYPAVVLNALTVDAHTVVSHPDKYCFYCRALLMTVAGLKLLRSAFCCPPQQYLTLAFTVLLFHFDYPRLSQGFLLDYFLMSLLCSKLWDLLYKLRFVLTYIAPWQITWGSAFHAFAQPFAVPHSAMLFVQALLSGLFSTPLNPLLGSAVFIMSYARPLKFWERDYNTKRVDHSNTRLVTQLDRNPGADDNNLNSIFYEHLTRSLQHTLCGDLVLGRWGNYGPGDCFVLASDYLNALVHLIEVGNGLVTFQLRGLEFRGTYCQQREVEAITEGVEEDEGCCCCEPGHLPRVLSFNAAFGQRWLAWEVTASKYVLEGYSISDNNAASMLQVFDLRKILITYYVKSIIYYVSRSPKLEVWLSHEGITAALRPVRVPGYADSDPTFSLSVDEDYDLRLSGLSLPSFCAVHLEWIQYCASRRSQPVDQDWNSPLVTLCFGLCVLGRRALGTASHSMSASLEPFLYGLHALFKGDFRITSPRDEWVFADMDLLHRVVAPGVRMALKLHQDHFTSPDEYEEPAALYDAIAANEERLVISHEGDPAWRSAILSNTPSLLALRHVLDDASDEYKIIMLNRRHLSFRVIKVNRECVRGLWAGQQQELVFLRNRNPERGSIQNAKQALRNMINSSCDQPLGYPIYVSPLTTSLAGSHPQLRALWGGPISLGAIAHWLLRTWERLHKGCGAGCNSGGNVDDSDCSGGGGLTSLSNNPPVAHPTPENTAGNGDQPLPPGPGWGPRSSLSGSGDGRPPPLLQWPPPRLPGPPPASPIPTEGPRTSRPPGPGLLSSEGPSGKWSLGGRKGLGGSDGEPASGSPKGGTPKSQAPLDLSLSLSLSLSPDVSTEASPPRASQDIPCLDSSAPESGTPMGALGDWPAPIEERESPAAQPLLEHQY.

Transmembrane regions (helical) follow at residues 33–53 (CFHL…YMVL) and 54–74 (PPSL…FATI). The segment at 96–118 (STMGELEEEPAQGDSNPPRDPGV) is disordered. The residue at position 127 (Ser-127) is a Phosphoserine. Thr-129 is subject to Phosphothreonine. Disordered regions lie at residues 193-242 (IGDL…PLLK), 260-517 (DRAL…LRPP), and 540-625 (VLPA…SHSR). Polar residues predominate over residues 294–303 (KAGSSDSCFS). The segment covering 305–319 (TDRETLSSFKSEKTN) has biased composition (basic and acidic residues). N-linked (GlcNAc...) asparagine glycosylation is present at Asn-319. Residue Thr-370 is modified to Phosphothreonine. Basic residues predominate over residues 391–409 (PSKRQPPLRRHSPPGRAPR). 2 positions are modified to phosphoserine: Ser-392 and Ser-431. Polar residues predominate over residues 427–436 (GSELSPASSL). Low complexity predominate over residues 444–460 (TDSSSSTSCYSPESSRG). Positions 488 to 497 (TQRTPSTASA) are enriched in polar residues. Ser-505 is modified (phosphoserine). A run of 7 helical transmembrane segments spans residues 790 to 812 (VLEN…LLLL), 819 to 836 (IWVF…YSLL), 852 to 872 (WVIA…IWLL), 880 to 900 (PFPP…FFCA), 903 to 923 (VATV…LPQV), 946 to 968 (SPLT…YGFC), and 980 to 1000 (HVPV…YHLS). The residue at position 1025 (Ser-1025) is a Phosphoserine. The next 4 membrane-spanning stretches (helical) occupy residues 1053–1073 (LVMC…TVFI), 1078–1098 (VLGF…HYLL), 1244–1264 (FVLT…HAFA), and 1280–1300 (LLSG…VFIM). Position 1697 is a phosphoserine (Ser-1697). Asn-1770 carries an N-linked (GlcNAc...) asparagine glycan. A disordered region spans residues 1844–2034 (GGLTSLSNNP…AAQPLLEHQY (191 aa)). The segment covering 1890–1910 (RPPPLLQWPPPRLPGPPPASP) has biased composition (pro residues). Phosphoserine is present on Ser-1909. A compositionally biased stretch (low complexity) spans 1925 to 1939 (GLLSSEGPSGKWSLG). Ser-1955 bears the Phosphoserine mark. Residues 1969–1978 (LSLSLSLSLS) show a composition bias toward low complexity.

Belongs to the pecanex family.

Its subcellular location is the membrane. The polypeptide is Pecanex-like protein 3 (Homo sapiens (Human)).